Here is a 445-residue protein sequence, read N- to C-terminus: Anthranilate N-benzoyltransferase protein 3 (445 aa).

Active-site proton acceptor residues include H164 and D392.

The protein belongs to the plant acyltransferase family. N-terminus is blocked.

The enzyme catalyses anthranilate + benzoyl-CoA = N-benzoylanthranilate + CoA. Its pathway is phytoalexin biosynthesis; methoxydianthramide B biosynthesis. Functionally, catalyzes the formation of N-benzoylanthranilate, in the course of methoxydianthramide B, a phytoalexin. Phytoalexins are produced in response to infection by parasites, and are essential for the expression of disease resistance. The chain is Anthranilate N-benzoyltransferase protein 3 (HCBT3) from Dianthus caryophyllus (Carnation).